A 182-amino-acid chain; its full sequence is Large ribosomal subunit protein uL6 (182 aa).

The protein belongs to the universal ribosomal protein uL6 family. Part of the 50S ribosomal subunit.

In terms of biological role, this protein binds to the 23S rRNA, and is important in its secondary structure. It is located near the subunit interface in the base of the L7/L12 stalk, and near the tRNA binding site of the peptidyltransferase center. This is Large ribosomal subunit protein uL6 from Dehalococcoides mccartyi (strain ATCC BAA-2266 / KCTC 15142 / 195) (Dehalococcoides ethenogenes (strain 195)).